The primary structure comprises 287 residues: N-methyltransferase verN (287 aa).

Belongs to the methyltransferase superfamily. LaeA methyltransferase family.

Its pathway is mycotoxin biosynthesis. In terms of biological role, N-methyltransferase; part of the gene cluster that mediates the biosynthesis of 11'-deoxyverticillin A, one of the dimeric epipolythiodioxopiperazines (ETPs) from the verticillin family that act as mycotoxins. 11'-deoxyverticillin A is required for normal conidiation. The nonribosomal peptide synthetase verP is speculated to be responsible for condensation of amino acids to form the carbon skeleton of verticillin, whereas the cluster-specific tailoring enzymes are involved in further modifications leading to the production of 11'-deoxyverticillin A. The sequence is that of N-methyltransferase verN from Clonostachys rogersoniana.